Here is a 474-residue protein sequence, read N- to C-terminus: Probable periplasmic serine endoprotease DegP-like (474 aa).

The N-terminal stretch at 1–26 (MTRMTRHLALWMLLSLAILASQSAMA) is a signal peptide. Active-site charge relay system residues include histidine 116, aspartate 146, and serine 219. Substrate-binding positions include 217–219 (GNS) and 274–278 (LGVMI). 2 consecutive PDZ domains span residues 263–354 (LRND…LRNG) and 360–462 (TVTV…YRSG).

It belongs to the peptidase S1C family.

The protein localises to the periplasm. It catalyses the reaction Acts on substrates that are at least partially unfolded. The cleavage site P1 residue is normally between a pair of hydrophobic residues, such as Val-|-Val.. In terms of biological role, might be efficient in the degradation of transiently denatured and unfolded proteins which accumulate in the periplasm following stress conditions. The polypeptide is Probable periplasmic serine endoprotease DegP-like (mucD) (Halomonas elongata (strain ATCC 33173 / DSM 2581 / NBRC 15536 / NCIMB 2198 / 1H9)).